Consider the following 124-residue polypeptide: MATINQLVRTPRVKQVVKSNVPALEACPQKRGVCTRVYTTTPKKPNSALRKVCRVRLTNGFEVTSYIGGEGHNLQEHSVVLIRGGRVKDLPGVRYHTVRGALDCAGVNDRKKGRSKYGVKRPKS.

Asp-89 carries the 3-methylthioaspartic acid modification.

Belongs to the universal ribosomal protein uS12 family. As to quaternary structure, part of the 30S ribosomal subunit. Contacts proteins S8 and S17. May interact with IF1 in the 30S initiation complex.

Its function is as follows. With S4 and S5 plays an important role in translational accuracy. Functionally, interacts with and stabilizes bases of the 16S rRNA that are involved in tRNA selection in the A site and with the mRNA backbone. Located at the interface of the 30S and 50S subunits, it traverses the body of the 30S subunit contacting proteins on the other side and probably holding the rRNA structure together. The combined cluster of proteins S8, S12 and S17 appears to hold together the shoulder and platform of the 30S subunit. This is Small ribosomal subunit protein uS12 from Vibrio atlanticus (strain LGP32) (Vibrio splendidus (strain Mel32)).